The primary structure comprises 199 residues: TATA-box-binding protein (199 aa).

A run of 2 repeats spans residues 10–86 (IENI…VKLL) and 101–177 (IQNI…YNQL).

Belongs to the TBP family.

Its function is as follows. General factor that plays a role in the activation of archaeal genes transcribed by RNA polymerase. Binds specifically to the TATA box promoter element which lies close to the position of transcription initiation. In Pyrobaculum aerophilum (strain ATCC 51768 / DSM 7523 / JCM 9630 / CIP 104966 / NBRC 100827 / IM2), this protein is TATA-box-binding protein.